Reading from the N-terminus, the 1379-residue chain is DNA-directed RNA polymerase subunit beta (1379 aa).

It belongs to the RNA polymerase beta chain family. In terms of assembly, the RNAP catalytic core consists of 2 alpha, 1 beta, 1 beta' and 1 omega subunit. When a sigma factor is associated with the core the holoenzyme is formed, which can initiate transcription.

It carries out the reaction RNA(n) + a ribonucleoside 5'-triphosphate = RNA(n+1) + diphosphate. In terms of biological role, DNA-dependent RNA polymerase catalyzes the transcription of DNA into RNA using the four ribonucleoside triphosphates as substrates. The polypeptide is DNA-directed RNA polymerase subunit beta (Campylobacter fetus subsp. fetus (strain 82-40)).